A 61-amino-acid polypeptide reads, in one-letter code: UPF0370 protein Spro_3503 (61 aa).

Residues 3–23 (WLADYWWIILLILVGMIISGI) form a helical membrane-spanning segment. The span at 38 to 48 (KPELPPHRDNN) shows a compositional bias: basic and acidic residues. The disordered stretch occupies residues 38-61 (KPELPPHRDNNAEWDDDDDWPKKK). Positions 49–61 (AEWDDDDDWPKKK) are enriched in acidic residues.

This sequence belongs to the UPF0370 family.

Its subcellular location is the cell membrane. The protein is UPF0370 protein Spro_3503 of Serratia proteamaculans (strain 568).